We begin with the raw amino-acid sequence, 339 residues long: Ribosomal RNA small subunit methyltransferase H (339 aa).

Residues G36 to Y38, D55, F82, D103, and Q110 contribute to the S-adenosyl-L-methionine site. The disordered stretch occupies residues G286 to P319.

Belongs to the methyltransferase superfamily. RsmH family.

The protein resides in the cytoplasm. The catalysed reaction is cytidine(1402) in 16S rRNA + S-adenosyl-L-methionine = N(4)-methylcytidine(1402) in 16S rRNA + S-adenosyl-L-homocysteine + H(+). In terms of biological role, specifically methylates the N4 position of cytidine in position 1402 (C1402) of 16S rRNA. This is Ribosomal RNA small subunit methyltransferase H from Methylobacterium nodulans (strain LMG 21967 / CNCM I-2342 / ORS 2060).